Reading from the N-terminus, the 605-residue chain is MITPTSFEPVELLYSKKKVNRTNWKKNVLKSNPEINNLCERIYPINRAIQFGKQFHPGKAEVKQKLDKTAIIQLILQHLSTKGLKQTKQTLEKEARTTTPIVEGLNESRLVTYIRNALKDTDRIYDLSMEHTEYSKEERQSKITEREELLFQMDLLEDEDEDDGVNIWDEPTENIITEKVHTTEYDINKSKENKDDQDDEVVKFASLNKLVEHLTHDSKHDLQFLKTFLMTYQSFCTPEKLMSKLQQRYNCPSGHDEMATRNIQIRVINVLKGWVDNYYSDFDDKLIAMLRTFIDQIQIKFPAPASAVNKSLTKMVEKLSPVNDSKHIFNEKTPEPMVPKNIFSNNLSIYDIDEEEIARQLTLIEFEIYRNIKPPELLNQSWNKTKLKSRAPNVLKMIDRFNSVSMWVATMIIQTTKVKARARMMTRFIKIADHLKNLNNYNSLMAIIAGLNFSSVYRLKYTREELSAQTMRTYSDLEKIMNSEGSFKTYRTRLQNVPPMLPYLGVHLTDLTFIDENPNNFVTDVGGKQVSLINFTKRTLVFKIISLIQETQVVPYNLQPVHQIQEFLLNIRSDLKAHTLDQYQQELYRESLKREPKKAQRSDVL.

Residues 67 to 99 form the LisH domain; sequence DKTAIIQLILQHLSTKGLKQTKQTLEKEARTTT. The 123-residue stretch at 198 to 320 folds into the N-terminal Ras-GEF domain; sequence DDEVVKFASL…SLTKMVEKLS (123 aa). Residues 353–597 enclose the Ras-GEF domain; sequence DEEEIARQLT…YRESLKREPK (245 aa).

Component of the Sca1 complex composed of at least gefA, gefH, scaA, phr, and the protein phosphatase 2A subunits pppA and pho2B. Interacts directly with gefH.

It is found in the cell membrane. Ras-bound GDP/GTP exchange factor required for normal activation of adenylyl cyclase. Component of the Sca1 complex, a regulator of cell motility, chemotaxis and signal relay. The Sca1 complex is recruited to the plasma membrane in a chemoattractant- and F-actin-dependent manner and is enriched at the leading edge of chemotaxing cells where it regulates F-actin dynamics and signal relay by controlling the activation of rasC and the downstream target of rapamycin complex 2 (TORC2)-Akt/protein kinase B (PKB) pathway. This Dictyostelium discoideum (Social amoeba) protein is Ras guanine nucleotide exchange factor A (gefA).